The primary structure comprises 254 residues: Insulin-like growth factor-binding protein 4 (254 aa).

The signal sequence occupies residues 1–21; the sequence is MLPFGLVAALLLAAGPRPSLG. One can recognise an IGFBP N-terminal domain in the interval 23-103; sequence EAIHCPPCSE…MHGQGVCTEL (81 aa). Disulfide bonds link C27/C53, C30/C55, C38/C56, C44/C59, C67/C80, and C74/C100. Residue N125 is glycosylated (N-linked (GlcNAc...) asparagine). 4 cysteine pairs are disulfide-bonded: C131-C138, C170-C200, C211-C222, and C224-C245. A Thyroglobulin type-1 domain is found at 167-245; sequence QGSCQSELHR…GLEPKGELDC (79 aa). S251 carries the phosphoserine modification.

Binds IGF2 more than IGF1.

It localises to the secreted. Functionally, IGF-binding proteins prolong the half-life of the IGFs and have been shown to either inhibit or stimulate the growth promoting effects of the IGFs on cell culture. They alter the interaction of IGFs with their cell surface receptors. The protein is Insulin-like growth factor-binding protein 4 (Igfbp4) of Mus musculus (Mouse).